Consider the following 98-residue polypeptide: RNA-binding protein Hfq (98 aa).

Residues 11-71 (DVFLNHVRRS…ISTVMPATPV (61 aa)) enclose the Sm domain.

The protein belongs to the Hfq family. In terms of assembly, homohexamer.

Functionally, RNA chaperone that binds small regulatory RNA (sRNAs) and mRNAs to facilitate mRNA translational regulation in response to envelope stress, environmental stress and changes in metabolite concentrations. Also binds with high specificity to tRNAs. The chain is RNA-binding protein Hfq from Gluconacetobacter diazotrophicus (strain ATCC 49037 / DSM 5601 / CCUG 37298 / CIP 103539 / LMG 7603 / PAl5).